The sequence spans 29 residues: uncharacterized protein (29 aa).

The interval 1–29 (MFKMKFGDTLPRSDFGTGGNKQAPGLELG) is disordered.

This is an uncharacterized protein from Saccharomyces cerevisiae (strain ATCC 204508 / S288c) (Baker's yeast).